Consider the following 177-residue polypeptide: MVLRIVASLLSIAALVLMAKDKQVVYLNLAGEELTLEAKHSYVEAFVYLVYSNGLVAIYCFLLVFALVFRLIDKAGCGKSAAWIIFLLDQGLAYVLLAAAAASTEVAYVAKRGNNKVGWSEVCSTFGHFCNLVGVSIVITFISVLAMATLSVMSARRLFKTYGPERKQISSNDAPAI.

A helical transmembrane segment spans residues 1–21 (MVLRIVASLLSIAALVLMAKD). Over 22-48 (KQVVYLNLAGEELTLEAKHSYVEAFVY) the chain is Cytoplasmic. Residues 49–69 (LVYSNGLVAIYCFLLVFALVF) traverse the membrane as a helical segment. Topologically, residues 70 to 80 (RLIDKAGCGKS) are extracellular. The chain crosses the membrane as a helical span at residues 81-101 (AAWIIFLLDQGLAYVLLAAAA). Residues 102–131 (ASTEVAYVAKRGNNKVGWSEVCSTFGHFCN) lie on the Cytoplasmic side of the membrane. The chain crosses the membrane as a helical span at residues 132-152 (LVGVSIVITFISVLAMATLSV). The Extracellular portion of the chain corresponds to 153 to 177 (MSARRLFKTYGPERKQISSNDAPAI).

The protein belongs to the Casparian strip membrane proteins (CASP) family. Homodimer and heterodimers.

It is found in the cell membrane. The chain is CASP-like protein 2U1 from Osmunda lancea (Fern).